Reading from the N-terminus, the 443-residue chain is Probable glycine dehydrogenase (decarboxylating) subunit 1 (443 aa).

The protein belongs to the GcvP family. N-terminal subunit subfamily. As to quaternary structure, the glycine cleavage system is composed of four proteins: P, T, L and H. In this organism, the P 'protein' is a heterodimer of two subunits.

The enzyme catalyses N(6)-[(R)-lipoyl]-L-lysyl-[glycine-cleavage complex H protein] + glycine + H(+) = N(6)-[(R)-S(8)-aminomethyldihydrolipoyl]-L-lysyl-[glycine-cleavage complex H protein] + CO2. In terms of biological role, the glycine cleavage system catalyzes the degradation of glycine. The P protein binds the alpha-amino group of glycine through its pyridoxal phosphate cofactor; CO(2) is released and the remaining methylamine moiety is then transferred to the lipoamide cofactor of the H protein. This Endomicrobium trichonymphae protein is Probable glycine dehydrogenase (decarboxylating) subunit 1.